Consider the following 282-residue polypeptide: Acetylglutamate kinase (282 aa).

Substrate-binding positions include 62 to 63 (GG), Arg-84, and Asn-178.

It belongs to the acetylglutamate kinase family. ArgB subfamily.

It is found in the cytoplasm. It carries out the reaction N-acetyl-L-glutamate + ATP = N-acetyl-L-glutamyl 5-phosphate + ADP. The protein operates within amino-acid biosynthesis; L-arginine biosynthesis; N(2)-acetyl-L-ornithine from L-glutamate: step 2/4. In terms of biological role, catalyzes the ATP-dependent phosphorylation of N-acetyl-L-glutamate. This Thermotoga sp. (strain RQ2) protein is Acetylglutamate kinase.